Consider the following 326-residue polypeptide: E3 ubiquitin-protein ligase SINAT3 (326 aa).

Residues 1-44 (MDLDSMDCTSTMDVTDDEEIHQDRHSYASVSKHHHTNNNTTNVN) form a disordered region. The RING-type zinc finger occupies 63–99 (CPVCTNSMYPPIHQCHNGHTLCSTCKARVHNRCPTCR). The SBD stretch occupies residues 113 to 306 (VAESLELPCK…KELKLRVTGR (194 aa)). Residues 116-176 (SLELPCKHMS…LVAHLRDDHK (61 aa)) form an SIAH-type zinc finger. 8 residues coordinate Zn(2+): C121, C128, H140, C144, C151, C158, H170, and H175.

Belongs to the SINA (Seven in absentia) family. As to quaternary structure, interacts with SINAT6. Interacts with WAV3. Interacts with FREE1. Interacts with ELC/VPS23A.

It is found in the endosome. The protein localises to the multivesicular body. The protein resides in the cytoplasmic vesicle. Its subcellular location is the autophagosome. It catalyses the reaction S-ubiquitinyl-[E2 ubiquitin-conjugating enzyme]-L-cysteine + [acceptor protein]-L-lysine = [E2 ubiquitin-conjugating enzyme]-L-cysteine + N(6)-ubiquitinyl-[acceptor protein]-L-lysine.. Its pathway is protein modification; protein ubiquitination. In terms of biological role, E3 ubiquitin-protein ligase that mediates ubiquitination and subsequent proteasomal degradation of target proteins. E3 ubiquitin ligases accept ubiquitin from an E2 ubiquitin-conjugating enzyme in the form of a thioester and then directly transfers the ubiquitin to targeted substrates. It probably triggers the ubiquitin-mediated degradation of different substrates. Modulates directly the ubiquitination and proteasomal-dependent degradation of FREE1, a component of the ESCRT-I complex. Modulates directly the ubiquitination and proteasomal-dependent degradation of ELC/VPS23A, a component of the ESCRT-I complex. In Arabidopsis thaliana (Mouse-ear cress), this protein is E3 ubiquitin-protein ligase SINAT3.